The primary structure comprises 880 residues: Leucine--tRNA ligase (880 aa).

Residues 46–56 (PYPSGALHMGH) carry the 'HIGH' region motif. The disordered stretch occupies residues 483–502 (SPIKTEPTWRQTTCPDCGGP). The 'KMSKS' region motif lies at 638-642 (KMSKS). Residue lysine 641 participates in ATP binding.

It belongs to the class-I aminoacyl-tRNA synthetase family.

Its subcellular location is the cytoplasm. The enzyme catalyses tRNA(Leu) + L-leucine + ATP = L-leucyl-tRNA(Leu) + AMP + diphosphate. This chain is Leucine--tRNA ligase, found in Xanthomonas oryzae pv. oryzae (strain PXO99A).